A 286-amino-acid polypeptide reads, in one-letter code: Dolichyl-diphosphooligosaccharide--protein glycosyltransferase subunit SWP1 (286 aa).

A signal peptide spans M1 to A19. Residues Y20 to P194 lie on the Lumenal side of the membrane. The chain crosses the membrane as a helical span at residues I195–L215. Residues N216–G228 lie on the Cytoplasmic side of the membrane. A helical transmembrane segment spans residues V229–A249. Residues R250–Y252 are Lumenal-facing. A helical membrane pass occupies residues L253 to L273. Residues T274–I286 lie on the Cytoplasmic side of the membrane.

This sequence belongs to the SWP1 family. Component of the oligosaccharyltransferase (OST) complex, which appears to exist in two assemblies comprising OST1, OST2, OST4, OST5, STT3, SWP1, WPB1, and either OST3 or OST6. OST assembly occurs through the formation of 3 subcomplexes. Subcomplex 1 contains OST1 and OST5, subcomplex 2 contains STT3, OST3, and OST4, and subcomplex 3 contains OST2, WBP1, and SWP1. Interacts with SEC61 and SSS1.

It is found in the endoplasmic reticulum membrane. The protein operates within protein modification; protein glycosylation. Functionally, subunit of the oligosaccharyl transferase (OST) complex that catalyzes the initial transfer of a defined glycan (Glc(3)Man(9)GlcNAc(2) in eukaryotes) from the lipid carrier dolichol-pyrophosphate to an asparagine residue within an Asn-X-Ser/Thr consensus motif in nascent polypeptide chains, the first step in protein N-glycosylation. N-glycosylation occurs cotranslationally and the complex associates with the Sec61 complex at the channel-forming translocon complex that mediates protein translocation across the endoplasmic reticulum (ER). All subunits are required for a maximal enzyme activity. This Saccharomyces cerevisiae (strain ATCC 204508 / S288c) (Baker's yeast) protein is Dolichyl-diphosphooligosaccharide--protein glycosyltransferase subunit SWP1 (SWP1).